The chain runs to 541 residues: Glutamyl-tRNA(Gln) amidotransferase subunit B, mitochondrial (541 aa).

This sequence belongs to the GatB/GatE family. GatB subfamily. As to quaternary structure, subunit of the heterotrimeric GatFAB amidotransferase (AdT) complex, composed of A, B and F subunits.

It localises to the mitochondrion. The catalysed reaction is L-glutamyl-tRNA(Gln) + L-glutamine + ATP + H2O = L-glutaminyl-tRNA(Gln) + L-glutamate + ADP + phosphate + H(+). Functionally, allows the formation of correctly charged Gln-tRNA(Gln) through the transamidation of misacylated Glu-tRNA(Gln) in the mitochondria. The reaction takes place in the presence of glutamine and ATP through an activated gamma-phospho-Glu-tRNA(Gln). This chain is Glutamyl-tRNA(Gln) amidotransferase subunit B, mitochondrial, found in Saccharomyces cerevisiae (strain RM11-1a) (Baker's yeast).